Consider the following 195-residue polypeptide: Imidazole glycerol phosphate synthase subunit HisH (195 aa).

One can recognise a Glutamine amidotransferase type-1 domain in the interval 1–195 (MIAVVDLGIG…LRLLENFRRL (195 aa)). The active-site Nucleophile is cysteine 72. Residues histidine 177 and glutamate 179 contribute to the active site.

As to quaternary structure, heterodimer of HisH and HisF.

The protein resides in the cytoplasm. It catalyses the reaction 5-[(5-phospho-1-deoxy-D-ribulos-1-ylimino)methylamino]-1-(5-phospho-beta-D-ribosyl)imidazole-4-carboxamide + L-glutamine = D-erythro-1-(imidazol-4-yl)glycerol 3-phosphate + 5-amino-1-(5-phospho-beta-D-ribosyl)imidazole-4-carboxamide + L-glutamate + H(+). The enzyme catalyses L-glutamine + H2O = L-glutamate + NH4(+). It functions in the pathway amino-acid biosynthesis; L-histidine biosynthesis; L-histidine from 5-phospho-alpha-D-ribose 1-diphosphate: step 5/9. IGPS catalyzes the conversion of PRFAR and glutamine to IGP, AICAR and glutamate. The HisH subunit catalyzes the hydrolysis of glutamine to glutamate and ammonia as part of the synthesis of IGP and AICAR. The resulting ammonia molecule is channeled to the active site of HisF. This Thermococcus kodakarensis (strain ATCC BAA-918 / JCM 12380 / KOD1) (Pyrococcus kodakaraensis (strain KOD1)) protein is Imidazole glycerol phosphate synthase subunit HisH.